The following is a 107-amino-acid chain: Keratin, type I cytoskeletal 20 (107 aa).

The interval 1–7 is head; the sequence is GNLWVGN. Residues 8–43 form a coil 1A region; sequence EKMTMKNLNDRLASYLEKVRSLEQSNSKFELQIKQW. One can recognise an IF rod domain in the interval 8-107; the sequence is EKMTMKNLND…ETERGIRLAV (100 aa). Positions 44-61 are linker 1; that stretch reads YESNTPGISRDHSAYLQQ. A coil 1B region spans residues 62-107; sequence IQDLRNQIRDAQLQNARCVLQIDNAKLAAEDFRLKYETERGIRLAV.

The protein belongs to the intermediate filament family. In terms of assembly, heterotetramer of two type I and two type II keratins. Associates with KRT8.

In terms of biological role, plays a significant role in maintaining keratin filament organization in intestinal epithelia. When phosphorylated, plays a role in the secretion of mucin in the small intestine. This chain is Keratin, type I cytoskeletal 20, found in Sus scrofa (Pig).